A 5005-amino-acid chain; its full sequence is Bridge-like lipid transfer protein family member 1 (5005 aa).

A helical membrane pass occupies residues Asn26 to Tyr46. Disordered stretches follow at residues Leu691–Asp721, Leu1218–Ala1257, and Gly1269–Gln1310. Composition is skewed to low complexity over residues Arg700–Pro711 and Ser1226–Ser1240. Positions Gly1248–Ala1257 are enriched in basic and acidic residues. A compositionally biased stretch (polar residues) spans Ser1278 to Leu1303. Phosphoserine is present on residues Ser1301, Ser1305, and Ser1323. Thr1325 is modified (phosphothreonine). Disordered stretches follow at residues Ser1343–Phe1376, Glu1400–Asp1427, Thr1521–Phe1548, and Phe1676–Ala1704. 2 positions are modified to phosphoserine: Ser1355 and Ser1406. A compositionally biased stretch (basic residues) spans Thr1521–Leu1530. Over residues Thr1691–Ala1704 the composition is skewed to polar residues. 2 positions are modified to phosphoserine: Ser1805 and Ser1808. Disordered regions lie at residues Asp1924–Pro1991, Ser2401–Val2420, and Thr2598–Val2677. 4 stretches are compositionally biased toward polar residues: residues Leu1931–Asp1948, Thr1959–Ser1971, Ser2401–Asp2418, and Thr2598–Phe2608. A phosphoserine mark is found at Ser2601 and Ser2603. The span at Ser2619–Ala2638 shows a compositional bias: low complexity. The segment covering Thr2643–Thr2665 has biased composition (basic and acidic residues). Position 2755 is a phosphoserine (Ser2755). The interval Arg2928–Leu2967 is disordered. Over residues Lys2949–Phe2964 the composition is skewed to polar residues. Ser3562 carries the post-translational modification Phosphoserine. Residues Pro3612–Ala3622 show a composition bias toward polar residues. Disordered stretches follow at residues Pro3612 to Asn3661, Ser3686 to Tyr3744, Arg3821 to Gln3843, Tyr3914 to Gly3954, Gly4088 to Ser4146, and Gln4325 to Ser4394. Ser3653 carries the post-translational modification Phosphoserine. The span at Ser3686 to Lys3700 shows a compositional bias: polar residues. The segment covering Glu3727–Glu3736 has biased composition (acidic residues). The span at Arg3821–Ser3837 shows a compositional bias: basic and acidic residues. Polar residues-rich tracts occupy residues Thr3931–Leu3940 and Pro4098–Lys4113. The segment covering Leu4122–Ser4146 has biased composition (low complexity). Residue Ser4124 is modified to Phosphoserine. The span at Gln4325–Lys4358 shows a compositional bias: polar residues. Residues Ser4359–Ser4372 are compositionally biased toward low complexity. Positions Lys4381–Ser4394 are enriched in polar residues.

As to expression, highly expressed in testis and ovary. Weakly or not expressed in other tissues.

The protein resides in the cell membrane. It is found in the endoplasmic reticulum membrane. The protein localises to the mitochondrion membrane. Tube-forming lipid transport protein which provides phosphatidylethanolamine for glycosylphosphatidylinositol (GPI) anchor synthesis in the endoplasmic reticulum. Plays a role in endosomal trafficking and endosome recycling. Also involved in the actin cytoskeleton and cilia structural dynamics. Acts as a regulator of phagocytosis. This Homo sapiens (Human) protein is Bridge-like lipid transfer protein family member 1.